The sequence spans 309 residues: uncharacterized protein (309 aa).

Transmembrane regions (helical) follow at residues 28–48 (IIAL…IMKP), 73–93 (MMLN…VIGW), 113–133 (LIVI…LLPI), 157–177 (ITAF…YFHS), 220–240 (FVVI…AALF), and 259–279 (IFAV…ILIL).

It is found in the cell membrane. This is an uncharacterized protein from Bacillus subtilis (strain 168).